The primary structure comprises 311 residues: tRNA-cytidine(32) 2-sulfurtransferase (311 aa).

The short motif at 47–52 is the PP-loop motif element; sequence SGGKDS. Residues Cys122, Cys125, and Cys213 each coordinate [4Fe-4S] cluster.

Belongs to the TtcA family. Homodimer. Requires Mg(2+) as cofactor. It depends on [4Fe-4S] cluster as a cofactor.

The protein resides in the cytoplasm. The enzyme catalyses cytidine(32) in tRNA + S-sulfanyl-L-cysteinyl-[cysteine desulfurase] + AH2 + ATP = 2-thiocytidine(32) in tRNA + L-cysteinyl-[cysteine desulfurase] + A + AMP + diphosphate + H(+). The protein operates within tRNA modification. Functionally, catalyzes the ATP-dependent 2-thiolation of cytidine in position 32 of tRNA, to form 2-thiocytidine (s(2)C32). The sulfur atoms are provided by the cysteine/cysteine desulfurase (IscS) system. This is tRNA-cytidine(32) 2-sulfurtransferase from Salmonella typhi.